Consider the following 504-residue polypeptide: Tyrosine-protein phosphatase non-receptor type substrate 1 (504 aa).

An N-terminal signal peptide occupies residues 1–30 (MEPAGPAPGRLGPLLCLLLAASCAWSGVAG). The Extracellular portion of the chain corresponds to 31 to 373 (EEELQVIQPD…NTGSNERNIY (343 aa)). An Ig-like V-type domain is found at 32–137 (EELQVIQPDK…SPDDVEFKSG (106 aa)). 2 disulfides stabilise this stretch: Cys55/Cys121 and Cys170/Cys228. Ig-like C1-type domains lie at 148 to 247 (PSAP…ANLS) and 254 to 348 (PTLE…HDLK). N-linked (GlcNAc...) asparagine glycosylation is found at Asn245, Asn270, Asn292, and Asn319. Cys273 and Cys331 form a disulfide bridge. The segment covering 336–355 (DGQPAVSKSHDLKVSAHPKE) has biased composition (basic and acidic residues). The segment at 336-364 (DGQPAVSKSHDLKVSAHPKEQGSNTAAEN) is disordered. Residues 374 to 394 (IVVGVVCTLLVALLMAALYLV) form a helical membrane-spanning segment. The Cytoplasmic segment spans residues 395–504 (RIRQKKAQGS…EYASVQVPRK (110 aa)). Residues 402 to 504 (QGSTSSTRLH…EYASVQVPRK (103 aa)) form a disordered region. A compositionally biased stretch (basic and acidic residues) spans 409–421 (RLHEPEKNAREIT). A Phosphotyrosine; by Tyr-kinases modification is found at Tyr429. Positions 429–432 (YADL) match the SH2-binding motif. An SH3-binding motif is present at residues 439-444 (KPAPQA). The segment covering 446-467 (EPNNHTEYASIQTSPQPASEDT) has biased composition (polar residues). Tyr453 and Tyr470 each carry phosphotyrosine; by Tyr-kinases. 3 consecutive short sequence motifs (SH2-binding) follow at residues 453 to 456 (YASI), 470 to 473 (YADL), and 496 to 499 (YASV). Tyr496 is modified (phosphotyrosine).

As to quaternary structure, binds PTPN11 when tyrosine-phosphorylated, except in macrophages, where it primarily binds PTPN6. Binds GRB2 in vitro. Binds FGR. Binds JAK2 irrespective of its phosphorylation status and forms a stable complex. Binds SCAP1 and/or SCAP2. The resulting complex recruits FYB1. Binds PTK2B. Interacts with TRIM2. Post-translationally, N-glycosylated. In terms of processing, phosphorylated on tyrosine residues in response to stimulation with EGF, growth hormone, insulin and PDGF. Dephosphorylated by PTPN11. In terms of tissue distribution, ubiquitous. Highly expressed in brain. Detected on myeloid cells, but not T-cells. Detected at lower levels in heart, placenta, lung, testis, ovary, colon, liver, small intestine, prostate, spleen, kidney, skeletal muscle and pancreas.

The protein localises to the membrane. In terms of biological role, immunoglobulin-like cell surface receptor for CD47. Acts as docking protein and induces translocation of PTPN6, PTPN11 and other binding partners from the cytosol to the plasma membrane. Supports adhesion of cerebellar neurons, neurite outgrowth and glial cell attachment. May play a key role in intracellular signaling during synaptogenesis and in synaptic function. Involved in the negative regulation of receptor tyrosine kinase-coupled cellular responses induced by cell adhesion, growth factors or insulin. Mediates negative regulation of phagocytosis, mast cell activation and dendritic cell activation. CD47 binding prevents maturation of immature dendritic cells and inhibits cytokine production by mature dendritic cells. Plays a role in antiviral immunity and limits new world arenavirus infection by decreasing virus internalization. Receptor for THBS1. Interaction with THBS1 stimulates phosphorylation of SIRPA. In response to THBS1, involved in ROS signaling in non-phagocytic cells, stimulating NADPH oxidase-derived ROS production. This is Tyrosine-protein phosphatase non-receptor type substrate 1 (SIRPA) from Homo sapiens (Human).